The chain runs to 480 residues: DNA repair protein RadA (480 aa).

The segment at 10–27 (CSECRHVSAKWVGRCLEC) adopts a C4-type zinc-finger fold. 95 to 102 (GDPGVGKS) lines the ATP pocket. A RadA KNRFG motif motif is present at residues 254-258 (KNRFG). Positions 353-480 (DIYLSTVGGM…TGHVPLGRGT (128 aa)) are lon-protease-like. Residues 459–480 (GTTLATPPSHSGTGHVPLGRGT) are disordered. The segment covering 461-470 (TLATPPSHSG) has biased composition (polar residues).

This sequence belongs to the RecA family. RadA subfamily.

DNA-dependent ATPase involved in processing of recombination intermediates, plays a role in repairing DNA breaks. Stimulates the branch migration of RecA-mediated strand transfer reactions, allowing the 3' invading strand to extend heteroduplex DNA faster. Binds ssDNA in the presence of ADP but not other nucleotides, has ATPase activity that is stimulated by ssDNA and various branched DNA structures, but inhibited by SSB. Does not have RecA's homology-searching function. The protein is DNA repair protein RadA of Mycobacterium tuberculosis (strain CDC 1551 / Oshkosh).